A 465-amino-acid chain; its full sequence is MSLRDCQAWKNAGLPLSTTSNEACKLFDATLTQYVKWTNDKSLGGIEGCLSKLRAADPTFAMGLAISNGLVLVGTGTSVALDKDLALAVKTMVELSQTQTLTPREQLHVSAVEMFAKGNFPRACDLWEQILRDHPTDMLALKFSHDAYFYLGYQEQMRDSVARVYPFWTPDIPLNSYVKGIYSFGLMETNFYDQAQKLAKEALSIEPTDAWSVHTVAHVHEMRAEIKDGLEFMQQSEGHWKDSDMLACHNYWHWALYLIEKGDYEAALTIYDSHILPSLQASGTMLDVVDSCSMLYRLQMEGVPLGQRWQTVLPVTQKHTRDHILLFNDAHFLMASLGARDLQTTRELLTTLQEASKSPGENCQHQLAKDVGLPLCQALLEAENGNPDRVLELLLPIRYRIVQIGGSNAQRDVFNQLLIHAAMTCTSSVHKNVARSLLMERDALKPNSPLTERLIRRAAAVHLMQ.

TPR repeat units follow at residues 104–137 (REQLHVSAVEMFAKGNFPRACDLWEQILRDHPTD), 176–209 (SYVKGIYSFGLMETNFYDQAQKLAKEALSIEPTD), and 248–281 (CHNYWHWALYLIEKGDYEAALTIYDSHILPSLQA).

Belongs to the TTC38 family.

In Mus musculus (Mouse), this protein is Tetratricopeptide repeat protein 38 (Ttc38).